The primary structure comprises 283 residues: 4-diphosphocytidyl-2-C-methyl-D-erythritol kinase (283 aa).

Lys-10 is a catalytic residue. 99–109 (PMGGGLGGGSS) serves as a coordination point for ATP. Residue Asp-141 is part of the active site.

Belongs to the GHMP kinase family. IspE subfamily. As to quaternary structure, homodimer.

It carries out the reaction 4-CDP-2-C-methyl-D-erythritol + ATP = 4-CDP-2-C-methyl-D-erythritol 2-phosphate + ADP + H(+). The protein operates within isoprenoid biosynthesis; isopentenyl diphosphate biosynthesis via DXP pathway; isopentenyl diphosphate from 1-deoxy-D-xylulose 5-phosphate: step 3/6. Its function is as follows. Catalyzes the phosphorylation of the position 2 hydroxy group of 4-diphosphocytidyl-2C-methyl-D-erythritol. This Salmonella choleraesuis (strain SC-B67) protein is 4-diphosphocytidyl-2-C-methyl-D-erythritol kinase.